We begin with the raw amino-acid sequence, 141 residues long: Nucleoside diphosphate kinase (141 aa).

Positions 9, 57, 85, 91, 102, and 112 each coordinate ATP. H115 acts as the Pros-phosphohistidine intermediate in catalysis.

This sequence belongs to the NDK family. In terms of assembly, homotetramer. It depends on Mg(2+) as a cofactor.

It is found in the cytoplasm. The catalysed reaction is a 2'-deoxyribonucleoside 5'-diphosphate + ATP = a 2'-deoxyribonucleoside 5'-triphosphate + ADP. It carries out the reaction a ribonucleoside 5'-diphosphate + ATP = a ribonucleoside 5'-triphosphate + ADP. In terms of biological role, major role in the synthesis of nucleoside triphosphates other than ATP. The ATP gamma phosphate is transferred to the NDP beta phosphate via a ping-pong mechanism, using a phosphorylated active-site intermediate. In Chloroherpeton thalassium (strain ATCC 35110 / GB-78), this protein is Nucleoside diphosphate kinase.